Here is a 93-residue protein sequence, read N- to C-terminus: Large ribosomal subunit protein uL23cz/uL23cy (93 aa).

Belongs to the universal ribosomal protein uL23 family. In terms of assembly, part of the 50S ribosomal subunit.

It is found in the plastid. It localises to the chloroplast. Its function is as follows. Binds to 23S rRNA. The protein is Large ribosomal subunit protein uL23cz/uL23cy (rpl23-A) of Drimys granadensis.